Consider the following 900-residue polypeptide: MTKMMTPAMCQYYEAKQAYPDTLIFFRMGDFYESFGEDAKTIAKELEITLTARGKDKSGERMPLAGIPYHAIDTYLPRLINKGYKVAICEQLEDPKKAKGIVKRGVVRVVTPGTAIDSSMFSDASNNYLMAVAGREIGKPGKNAENEFEIGVSFLDISTGEFLTTQFRDSENFEKLLSELARMRPSECILPSSLYENPALAERLRAQTIVQEFAPDISGAKEAGERLKNHFRVATLEGMGCENLDFAVYSAWAALEYAQTTQMRELTHINTLRTYSNSEFMILDSVTLRNLEIVKNVRDEGDENSLYRILNHTKTPMGSRALKKWLLKPLLSVEKINYRLDAVEELTAKPLLRYDLRNWLSDVRDIERLVGRVVYGNSNARDLVALKKSLEALPPVRDSLLENIESTILNDIAVGLASFSELENLAEMIDRAIVDEPPISVREGGMIKSGYNAELDELKDIASNSRQWIANFQQKERERSGIKSLKVGYNKIFGYYIEVTNANSSQVPEDYIRKQTMANAERFFTPELKEKESLILTANEKAIALEYEIFTEILQTLSAHSRELQETAERIGTLDVLTDLAEVAENNNYIRPQLTDDCKILIRDGRHPVVENTVHGGFVPNDTEMDCKENQFLLVTGPNMAGKSTYMRQTALIAIMAQVGSFVPASYASIGIIDQVFTRIGAFDDLASGQSTFMVEMVELANILNNASPRSLVLLDEIGRGTSTYDGYSIAKAVVEFLHNRGKVGVRALFATHYHQLTALEEKLKRVKNYHVAVKEEGHELVFLRKIVPGATDRSYGIQVARLAGVPEKVIERANEILKELERENVLEEVEDSKNGKKRKSKATARYTQMMLFDPGDSGGNTAKVNRPSPVETVLKKLNVDEMTPIEALNKLHELKRLLN.

ATP is bound at residue G637 to S644.

The protein belongs to the DNA mismatch repair MutS family.

Functionally, this protein is involved in the repair of mismatches in DNA. It is possible that it carries out the mismatch recognition step. This protein has a weak ATPase activity. The protein is DNA mismatch repair protein MutS of Methanosarcina barkeri (strain Fusaro / DSM 804).